The sequence spans 220 residues: 7-cyano-7-deazaguanine synthase (220 aa).

10–20 (FSGGQDSTTCL) serves as a coordination point for ATP. Zn(2+) contacts are provided by cysteine 186, cysteine 195, cysteine 198, and cysteine 201.

This sequence belongs to the QueC family. As to quaternary structure, homodimer. Requires Zn(2+) as cofactor.

The catalysed reaction is 7-carboxy-7-deazaguanine + NH4(+) + ATP = 7-cyano-7-deazaguanine + ADP + phosphate + H2O + H(+). The protein operates within purine metabolism; 7-cyano-7-deazaguanine biosynthesis. Functionally, catalyzes the ATP-dependent conversion of 7-carboxy-7-deazaguanine (CDG) to 7-cyano-7-deazaguanine (preQ(0)). The polypeptide is 7-cyano-7-deazaguanine synthase (Bacillus anthracis (strain A0248)).